A 115-amino-acid polypeptide reads, in one-letter code: uncharacterized protein (115 aa).

3 consecutive transmembrane segments (helical) span residues 6–26 (ILII…PFMV), 43–63 (ALSC…IHIL), and 84–104 (IFKV…VLVQ).

It belongs to the AzlD/HI_1737/HP1330 family.

Its subcellular location is the cell membrane. This is an uncharacterized protein from Helicobacter pylori (strain ATCC 700392 / 26695) (Campylobacter pylori).